Here is a 367-residue protein sequence, read N- to C-terminus: DNA replication and repair protein RecF (367 aa).

Residue 30–37 (GANGSGKT) coordinates ATP.

This sequence belongs to the RecF family.

The protein resides in the cytoplasm. Functionally, the RecF protein is involved in DNA metabolism; it is required for DNA replication and normal SOS inducibility. RecF binds preferentially to single-stranded, linear DNA. It also seems to bind ATP. In Pseudomonas fluorescens (strain SBW25), this protein is DNA replication and repair protein RecF.